Reading from the N-terminus, the 358-residue chain is tRNA-specific 2-thiouridylase MnmA (358 aa).

ATP-binding positions include 8-15 (AMSGGVDS) and methionine 35. The interval 95-97 (NPD) is interaction with target base in tRNA. The Nucleophile role is filled by cysteine 100. Cysteine 100 and cysteine 194 are disulfide-bonded. Position 124 (glycine 124) interacts with ATP. Residues 144–146 (KDQ) form an interaction with tRNA region. Catalysis depends on cysteine 194, which acts as the Cysteine persulfide intermediate. An interaction with tRNA region spans residues 301-302 (RY).

The protein belongs to the MnmA/TRMU family.

The protein resides in the cytoplasm. It carries out the reaction S-sulfanyl-L-cysteinyl-[protein] + uridine(34) in tRNA + AH2 + ATP = 2-thiouridine(34) in tRNA + L-cysteinyl-[protein] + A + AMP + diphosphate + H(+). Functionally, catalyzes the 2-thiolation of uridine at the wobble position (U34) of tRNA, leading to the formation of s(2)U34. This is tRNA-specific 2-thiouridylase MnmA from Chlamydia trachomatis serovar L2 (strain ATCC VR-902B / DSM 19102 / 434/Bu).